A 1013-amino-acid polypeptide reads, in one-letter code: Sodium/potassium-transporting ATPase subunit alpha-3 (1013 aa).

Residues 1 to 24 (MGDKKDDKDSPKKNKGKERRDLDD) form a disordered region. The Cytoplasmic portion of the chain corresponds to 1-77 (MGDKKDDKDS…NALTPPPTTP (77 aa)). Phosphoserine occurs at positions 37 and 56. Positions 72 to 74 (PPP) are interaction with phosphoinositide-3 kinase. The chain crosses the membrane as a helical span at residues 78–98 (EWVKFCRQLFGGFSILLWIGA). The Extracellular portion of the chain corresponds to 99 to 121 (ILCFLAYGIQAGTEDDPSGDNLY). The chain crosses the membrane as a helical span at residues 122 to 142 (LGIVLAAVVIITGCFSYYQEA). Topologically, residues 143–278 (KSSKIMESFK…VGKTPIAIEI (136 aa)) are cytoplasmic. Phosphoserine is present on residues serine 218 and serine 265. Residues 279–298 (EHFIQLITGVAVFLGVSFFI) traverse the membrane as a helical segment. The Extracellular portion of the chain corresponds to 299-310 (LSLILGYTWLEA). The chain crosses the membrane as a helical span at residues 311 to 328 (VIFLIGIIVANVPEGLLA). Topologically, residues 329–762 (TVTVCLTLTA…EEGRLIFDNL (434 aa)) are cytoplasmic. The active-site 4-aspartylphosphate intermediate is aspartate 366. Serine 442 carries the phosphoserine modification. Tyrosine 548 is subject to Phosphotyrosine. Mg(2+) contacts are provided by aspartate 707 and aspartate 711. A helical transmembrane segment spans residues 763–782 (KKSIAYTLTSNIPEITPFLL). Residues 783-792 (FIMANIPLPL) are Extracellular-facing. The chain crosses the membrane as a helical span at residues 793-813 (GTITILCIDLGTDMVPAISLA). At 814–833 (YEAAESDIMKRQPRNPRTDK) the chain is on the cytoplasmic side. The helical transmembrane segment at 834–856 (LVNERLISMAYGQIGMIQALGGF) threads the bilayer. Residues 857–908 (FSYFVILAENGFLPGNLVGIRLNWDDRTVNDLEDSYGQQWTYEQRKVVEFTC) are Extracellular-facing. Residues 909–928 (HTAFFVSIVVVQWADLIICK) traverse the membrane as a helical segment. Residues 929 to 941 (TRRNSVFQQGMKN) lie on the Cytoplasmic side of the membrane. A Phosphoserine; by PKA modification is found at serine 933. Residues 942–960 (KILIFGLFEETALAAFLSY) traverse the membrane as a helical segment. Residues 961 to 975 (CPGMDVALRMYPLKP) lie on the Extracellular side of the membrane. A helical membrane pass occupies residues 976–996 (SWWFCAFPYSFLIFVYDEIRK). Topologically, residues 997-1013 (LILRRNPGGWVEKETYY) are cytoplasmic.

Belongs to the cation transport ATPase (P-type) (TC 3.A.3) family. Type IIC subfamily. In terms of assembly, the sodium/potassium-transporting ATPase is composed of a catalytic alpha subunit, an auxiliary non-catalytic beta subunit and an additional regulatory subunit. Interacts with regulatory subunit FXYD1.

It is found in the cell membrane. The catalysed reaction is K(+)(out) + Na(+)(in) + ATP + H2O = K(+)(in) + Na(+)(out) + ADP + phosphate + H(+). Its function is as follows. This is the catalytic component of the active enzyme, which catalyzes the hydrolysis of ATP coupled with the exchange of sodium and potassium ions across the plasma membrane. This action creates the electrochemical gradient of sodium and potassium ions, providing the energy for active transport of various nutrients. This Homo sapiens (Human) protein is Sodium/potassium-transporting ATPase subunit alpha-3 (ATP1A3).